The chain runs to 349 residues: Dihydroorotate dehydrogenase (quinone) (349 aa).

FMN is bound by residues 67–71 (AGLDK) and threonine 91. Lysine 71 contacts substrate. Residue 116–120 (NRLGF) coordinates substrate. Positions 147 and 180 each coordinate FMN. A substrate-binding site is contributed by asparagine 180. The active-site Nucleophile is the serine 183. Asparagine 185 provides a ligand contact to substrate. Residues lysine 225 and threonine 253 each contribute to the FMN site. 254–255 (NT) contacts substrate. FMN is bound by residues glycine 276, glycine 305, and 326–327 (YT).

The protein belongs to the dihydroorotate dehydrogenase family. Type 2 subfamily. In terms of assembly, monomer. FMN serves as cofactor.

The protein localises to the cell membrane. The catalysed reaction is (S)-dihydroorotate + a quinone = orotate + a quinol. Its pathway is pyrimidine metabolism; UMP biosynthesis via de novo pathway; orotate from (S)-dihydroorotate (quinone route): step 1/1. Functionally, catalyzes the conversion of dihydroorotate to orotate with quinone as electron acceptor. In Bordetella pertussis (strain Tohama I / ATCC BAA-589 / NCTC 13251), this protein is Dihydroorotate dehydrogenase (quinone).